The primary structure comprises 591 residues: Calnexin (591 aa).

The signal sequence occupies residues 1-20 (MEGKWLLCLLLVLGTAAVEA). The Lumenal segment spans residues 21 to 482 (HDGHDDDAID…QMLEAAEERP (462 aa)). Residues S75 and D118 each coordinate Ca(2+). The residue at position 138 (K138) is an N6-acetyllysine. A disulfide bond links C161 and C195. The an alpha-D-glucoside site is built by Y165, K167, Y186, and D193. The disordered stretch occupies residues 261-347 (GNLLNDMTPP…EKPEDWDEDM (87 aa)). Basic and acidic residues predominate over residues 275-320 (REIEDPEDRKPEDWDERPKIADPDAVKPDDWDEDAPSKIPDEEATK). The p domain (Extended arm) stretch occupies residues 277–410 (IEDPEDRKPE…RKIPNPDFFE (134 aa)). 5 tandem repeats follow at residues 279–291 (DPEDRKPEDWDER), 296–308 (DPDAVKPDDWDED), 315–327 (DEEATKPEGWLDD), 334–346 (DPDAEKPEDWDED), and 349–359 (GEWEAPQIANP). 4 X approximate repeats regions lie at residues 279–346 (DPED…WDED) and 349–406 (GEWE…IPNP). Residues 324–347 (WLDDEPEYIPDPDAEKPEDWDEDM) show a composition bias toward acidic residues. Residues 327–360 (DEPEYIPDPDAEKPEDWDEDMDGEWEAPQIANPK) form an interaction with PPIB region. C361 and C367 are oxidised to a cystine. Tandem repeats lie at residues 368–378 (GVWQRPMIDNP), 382–392 (GKWKPPMIDNP), and 396–406 (GIWKPRKIPNP). E426 serves as a coordination point for an alpha-D-glucoside. D437 contributes to the Ca(2+) binding site. A helical transmembrane segment spans residues 483–503 (WLWVVYILTVALPVFLVILFC). 2 S-palmitoyl cysteine lipidation sites follow: C503 and C504. Residues 504 to 591 (CSGKKQSNAM…SPRNRKPRRE (88 aa)) lie on the Cytoplasmic side of the membrane. The segment at 504–591 (CSGKKQSNAM…SPRNRKPRRE (88 aa)) is sufficient to mediate interaction with SGIP1. Over residues 514–539 (EYKKTDAPQPDVKDEEGKEEEKNKRD) the composition is skewed to basic and acidic residues. Residues 514-591 (EYKKTDAPQP…SPRNRKPRRE (78 aa)) are disordered. At S553 the chain carries Phosphoserine. The span at 555–568 (AEEDGVTGSQDEED) shows a compositional bias: acidic residues. The residue at position 561 (T561) is a Phosphothreonine. A Phosphoserine; by MAPK3 modification is found at S563. S582 carries the post-translational modification Phosphoserine.

This sequence belongs to the calreticulin family. In terms of assembly, interacts with MAPK3/ERK1. Interacts with KCNH2. Associates with ribosomes. The palmitoylated form interacts with the ribosome-translocon complex component SSR1, promoting efficient folding of glycoproteins. Interacts with SERPINA2P/SERPINA2 and with the S and Z variants of SERPINA1. Interacts with SGIP1; involved in negative regulation of endocytosis. Interacts with PPIB. Interacts with SMIM22. Interacts with TMX2. Interacts with TMEM35A/NACHO. Interacts with CHRNA7. Interacts with reticulophagy regulators RETREG2 and RETREG3. Interacts with DNM1L; may form part of a larger protein complex at the ER-mitochondrial interface during mitochondrial fission. Interacts with ADAM7. In terms of processing, phosphorylated at Ser-563 by MAPK3/ERK1. Phosphorylation by MAPK3/ERK1 increases its association with ribosomes. Post-translationally, palmitoylation by DHHC6 leads to the preferential localization to the perinuclear rough ER. It mediates the association of calnexin with the ribosome-translocon complex (RTC) which is required for efficient folding of glycosylated proteins. Ubiquitinated, leading to proteasomal degradation. Probably ubiquitinated by ZNRF4. In terms of tissue distribution, expressed in sperm (at protein level).

Its subcellular location is the endoplasmic reticulum membrane. The protein resides in the mitochondrion membrane. The protein localises to the melanosome membrane. Its function is as follows. Calcium-binding protein that interacts with newly synthesized monoglucosylated glycoproteins in the endoplasmic reticulum. It may act in assisting protein assembly and/or in the retention within the ER of unassembled protein subunits. It seems to play a major role in the quality control apparatus of the ER by the retention of incorrectly folded proteins. Associated with partial T-cell antigen receptor complexes that escape the ER of immature thymocytes, it may function as a signaling complex regulating thymocyte maturation. Additionally it may play a role in receptor-mediated endocytosis at the synapse. The chain is Calnexin (Canx) from Mus musculus (Mouse).